Here is a 321-residue protein sequence, read N- to C-terminus: tRNA-dihydrouridine synthase B (321 aa).

FMN is bound by residues 16 to 18 (PMA) and Q70. The Proton donor role is filled by C100. FMN is bound by residues K139, 200-202 (NGD), and 224-225 (GR).

The protein belongs to the Dus family. DusB subfamily. It depends on FMN as a cofactor.

It catalyses the reaction a 5,6-dihydrouridine in tRNA + NAD(+) = a uridine in tRNA + NADH + H(+). It carries out the reaction a 5,6-dihydrouridine in tRNA + NADP(+) = a uridine in tRNA + NADPH + H(+). Catalyzes the synthesis of 5,6-dihydrouridine (D), a modified base found in the D-loop of most tRNAs, via the reduction of the C5-C6 double bond in target uridines. This chain is tRNA-dihydrouridine synthase B, found in Escherichia coli O157:H7.